The primary structure comprises 421 residues: ATP-dependent RNA helicase RhlB (421 aa).

The Q motif motif lies at 9–37 (QKFSDFALHPQVVEALEKKGFYNCTPIQA). Residues 40 to 219 (LPLTLAGRDV…FEQMNNAEYV (180 aa)) form the Helicase ATP-binding domain. 53-60 (AQTGTGKT) is a binding site for ATP. The short motif at 165–168 (DEAD) is the DEAD box element. A Helicase C-terminal domain is found at 245 to 390 (RLLQTLIEEE…VSKYNPEALM (146 aa)). The tract at residues 396–421 (PLRLTRSRPGNGPRRAGAPRNRRRSG) is disordered. Positions 402-414 (SRPGNGPRRAGAP) are enriched in low complexity.

This sequence belongs to the DEAD box helicase family. RhlB subfamily. Component of the RNA degradosome, which is a multiprotein complex involved in RNA processing and mRNA degradation.

Its subcellular location is the cytoplasm. The enzyme catalyses ATP + H2O = ADP + phosphate + H(+). Its function is as follows. DEAD-box RNA helicase involved in RNA degradation. Has RNA-dependent ATPase activity and unwinds double-stranded RNA. In Salmonella arizonae (strain ATCC BAA-731 / CDC346-86 / RSK2980), this protein is ATP-dependent RNA helicase RhlB.